Here is a 676-residue protein sequence, read N- to C-terminus: E3 ubiquitin-protein ligase ICP0 (676 aa).

An RING-type zinc finger spans residues 13–52 (CCICLDAITGAARALPCLHAFCLACIRRWLEGRPTCPLCK). 3 disordered regions span residues 101–135 (DLTAADGEAPGAGGEAGAAGGSEAGGGAGGAEAAG), 266–486 (HLIP…PAPI), and 555–676 (AAIS…AWRQ). Positions 110-135 (PGAGGEAGAAGGSEAGGGAGGAEAAG) are enriched in gly residues. Positions 286 to 303 (SDSDSEGSEDDSWSESEE) are enriched in acidic residues. Residues 304–314 (SSSGLSTSDLT) are compositionally biased toward low complexity. Residues 315 to 328 (AIDDTETEPETDAE) are compositionally biased toward acidic residues. The segment covering 351–361 (YVSTRGRQTPA) has biased composition (polar residues). 2 stretches are compositionally biased toward low complexity: residues 375–388 (GRAAAVSAPPSSRS) and 397–411 (LPAAPRAAPAAQARA). Gly residues predominate over residues 422–439 (GAGLGVAAGETAGWGVGS). Residues 440-450 (EEGRGERRAKL) show a composition bias toward basic and acidic residues. Over residues 474 to 484 (TPAPAPAPAPA) the composition is skewed to pro residues. Residues 555-597 (AAISTRAPTPSPAGRAPAADPRRAGAPALAGAARAEAGRNGNP) are compositionally biased toward low complexity.

Post-translationally, auto-ubiquitinated. The strongly acidic region might serve as a transcriptional activation domain, possibly regulated through phosphorylation by casein kinase II.

The catalysed reaction is S-ubiquitinyl-[E2 ubiquitin-conjugating enzyme]-L-cysteine + [acceptor protein]-L-lysine = [E2 ubiquitin-conjugating enzyme]-L-cysteine + N(6)-ubiquitinyl-[acceptor protein]-L-lysine.. Evades nuclear antiviral defenses triggered by dsDNA viruses. Acts during the initial stages of lytic infection and the reactivation of latent viral genome. Prevents the antiviral effect of nuclear bodies by degrading host PML and SP100. This is E3 ubiquitin-protein ligase ICP0 (BICP0) from Bos taurus (Bovine).